The sequence spans 109 residues: Thioredoxin 2 (109 aa).

One can recognise a Thioredoxin domain in the interval 2–109 (SGKYFEATDQ…IAKKLDEHIG (108 aa)). A disulfide bond links cysteine 33 and cysteine 36.

This sequence belongs to the thioredoxin family.

Its function is as follows. Participates in various redox reactions through the reversible oxidation of its active center dithiol to a disulfide and catalyzes dithiol-disulfide exchange reactions. This chain is Thioredoxin 2 (trx2), found in Chlorobaculum tepidum (strain ATCC 49652 / DSM 12025 / NBRC 103806 / TLS) (Chlorobium tepidum).